Here is a 400-residue protein sequence, read N- to C-terminus: Signal recognition particle receptor FtsY (400 aa).

Disordered stretches follow at residues 12 to 37 and 51 to 86; these read TKKTNQVEQDEPILDQQDQQDQQEEQ and NKIKKTKTSETKKQEKPIETLKEKKKREKQKEKDKK. A compositionally biased stretch (basic and acidic residues) spans 51 to 72; the sequence is NKIKKTKTSETKKQEKPIETLK. GTP contacts are provided by residues 192 to 199, 278 to 282, and 342 to 345; these read GVNGTGKT, DTAGR, and TKMD.

The protein belongs to the GTP-binding SRP family. FtsY subfamily. Part of the signal recognition particle protein translocation system, which is composed of SRP and FtsY.

The protein localises to the cell membrane. It is found in the cytoplasm. The enzyme catalyses GTP + H2O = GDP + phosphate + H(+). Its function is as follows. Involved in targeting and insertion of nascent membrane proteins into the cytoplasmic membrane. Acts as a receptor for the complex formed by the signal recognition particle (SRP) and the ribosome-nascent chain (RNC). This chain is Signal recognition particle receptor FtsY, found in Mycoplasma mycoides subsp. mycoides SC (strain CCUG 32753 / NCTC 10114 / PG1).